A 290-amino-acid chain; its full sequence is Probable lipid hydrolase 463L (290 aa).

2 consecutive transmembrane segments (helical) span residues 26–46 and 53–73; these read TLVL…LNGL and ISTF…SIGY. The 181-residue stretch at 27–207 folds into the PNPLA domain; it reads LVLSGGAMRG…WNNFPIDIAI (181 aa). The short motif at 58–62 is the GXSXG element; that stretch reads GISSG. S60 (nucleophile) is an active-site residue. D194 (proton acceptor) is an active-site residue. A DGA/G motif is present at residues 194–196; that stretch reads DGG.

It is found in the membrane. Probable lipid hydrolase. This Invertebrate iridescent virus 6 (IIV-6) protein is Probable lipid hydrolase 463L.